The sequence spans 509 residues: tRNA-2-methylthio-N(6)-dimethylallyladenosine synthase (509 aa).

A compositionally biased stretch (polar residues) spans 1 to 15 (MNEQQRLASRQANSS). The interval 1–25 (MNEQQRLASRQANSSTKKEEKDYSK) is disordered. Basic and acidic residues predominate over residues 16-25 (TKKEEKDYSK). Positions 66-184 (RKFYIRTYGC…LPYILKDAMF (119 aa)) constitute an MTTase N-terminal domain. [4Fe-4S] cluster is bound by residues Cys75, Cys111, Cys145, Cys221, Cys225, and Cys228. The region spanning 207–437 (RRGDIKAWVN…NTLVNEYGVN (231 aa)) is the Radical SAM core domain. The region spanning 440 to 503 (KRYIGQIVEV…TWSLNGELVK (64 aa)) is the TRAM domain.

Belongs to the methylthiotransferase family. MiaB subfamily. As to quaternary structure, monomer. Requires [4Fe-4S] cluster as cofactor.

It localises to the cytoplasm. It catalyses the reaction N(6)-dimethylallyladenosine(37) in tRNA + (sulfur carrier)-SH + AH2 + 2 S-adenosyl-L-methionine = 2-methylsulfanyl-N(6)-dimethylallyladenosine(37) in tRNA + (sulfur carrier)-H + 5'-deoxyadenosine + L-methionine + A + S-adenosyl-L-homocysteine + 2 H(+). Catalyzes the methylthiolation of N6-(dimethylallyl)adenosine (i(6)A), leading to the formation of 2-methylthio-N6-(dimethylallyl)adenosine (ms(2)i(6)A) at position 37 in tRNAs that read codons beginning with uridine. The chain is tRNA-2-methylthio-N(6)-dimethylallyladenosine synthase from Bacillus mycoides (strain KBAB4) (Bacillus weihenstephanensis).